We begin with the raw amino-acid sequence, 258 residues long: Alpha-fibrinogenase albofibrase (258 aa).

Residues 1 to 18 form the signal peptide; sequence MVLIRVLANLLILQLSYA. Positions 19–24 are excised as a propeptide; it reads QKSSEL. Residues 25–249 enclose the Peptidase S1 domain; the sequence is VVGGDECNIN…YNDWIQSIIA (225 aa). Disulfide bonds link C31–C163, C50–C66, C98–C256, C142–C210, C174–C189, and C200–C225. N44 carries an N-linked (GlcNAc...) asparagine glycan. Active-site charge relay system residues include H65 and D110. S204 serves as the catalytic Charge relay system.

It belongs to the peptidase S1 family. Snake venom subfamily. As to quaternary structure, monomer. As to expression, expressed by the venom gland.

It localises to the secreted. Functionally, the recombinant protein has fibrinogenolytic activity against the Aalpha chain (FGA) of fibrinogen. Activates plasminogen (PLG) (is 4-fold less active than urokinase). Has weak thrombin-like enzyme activity. Has enzymatic activity against a trypsin-like substrate (S-3013) and shows a weaker activity on an activated protein C substrate (S-3125). This is Alpha-fibrinogenase albofibrase from Trimeresurus albolabris (White-lipped pit viper).